Reading from the N-terminus, the 722-residue chain is Dual specificity tyrosine-phosphorylation-regulated kinase 2 (722 aa).

S25 is subject to Phosphoserine. The interval 54–127 (TTTSLNGNGN…SGELKCNTPM (74 aa)) is disordered. The segment covering 66–119 (GNSNSNNNNNIGSPVSSSTTNSSNGGNERGSSTKSNSSSGSGSSGNSASSTGSG) has biased composition (low complexity). The region spanning 198-494 (YEILEVIGKG…PDEAAHHEFL (297 aa)) is the Protein kinase domain. ATP-binding positions include 204 to 212 (IGKGSFGQV) and K227. Residue D324 is the Proton acceptor of the active site. Residues Y356 and Y358 each carry the phosphotyrosine; by autocatalysis modification. Disordered regions lie at residues 494-519 (LQPSASSRHRSCRMSSSSSSSGLNSV), 557-582 (TTKSRQQPPSQSHGHAQSNGHLPDIK), 624-643 (GSGSTHHVSSAATRKHLPGT), and 679-722 (TTTH…FGRA). Low complexity predominate over residues 506-519 (RMSSSSSSSGLNSV). A compositionally biased stretch (polar residues) spans 557-576 (TTKSRQQPPSQSHGHAQSNG). 2 stretches are compositionally biased toward low complexity: residues 626 to 635 (GSTHHVSSAA) and 689 to 707 (GQQQQQSSSGASTMAMSHS).

Belongs to the protein kinase superfamily. CMGC Ser/Thr protein kinase family. MNB/DYRK subfamily. Requires Mg(2+) as cofactor. Phosphorylated on serine/threonine residues.

The protein resides in the cytoplasm. The enzyme catalyses L-seryl-[protein] + ATP = O-phospho-L-seryl-[protein] + ADP + H(+). It carries out the reaction L-threonyl-[protein] + ATP = O-phospho-L-threonyl-[protein] + ADP + H(+). It catalyses the reaction L-tyrosyl-[protein] + ATP = O-phospho-L-tyrosyl-[protein] + ADP + H(+). Autophosphorylates on Tyr-356 and Tyr-358. Functionally, in vitro; can phosphorylate exogenous substrates on Ser and Thr residues. May have a physiological role in development being involved in cellular growth and differentiation. This Drosophila melanogaster (Fruit fly) protein is Dual specificity tyrosine-phosphorylation-regulated kinase 2.